The chain runs to 102 residues: NADH-quinone oxidoreductase subunit K (102 aa).

The next 3 membrane-spanning stretches (helical) occupy residues 5–25 (ITHYLIVSALIFTIGIAGIFL), 31–51 (IIILMSIELILLSVNLNFVAF), and 66–86 (FILTVAAAEAAIGLAILVVFF).

Belongs to the complex I subunit 4L family. As to quaternary structure, NDH-1 is composed of 14 different subunits. Subunits NuoA, H, J, K, L, M, N constitute the membrane sector of the complex.

It localises to the cell inner membrane. The catalysed reaction is a quinone + NADH + 5 H(+)(in) = a quinol + NAD(+) + 4 H(+)(out). Its function is as follows. NDH-1 shuttles electrons from NADH, via FMN and iron-sulfur (Fe-S) centers, to quinones in the respiratory chain. The immediate electron acceptor for the enzyme in this species is believed to be ubiquinone. Couples the redox reaction to proton translocation (for every two electrons transferred, four hydrogen ions are translocated across the cytoplasmic membrane), and thus conserves the redox energy in a proton gradient. The chain is NADH-quinone oxidoreductase subunit K from Bartonella quintana (strain Toulouse) (Rochalimaea quintana).